A 318-amino-acid chain; its full sequence is NADH-ubiquinone oxidoreductase chain 1 (318 aa).

8 helical membrane-spanning segments follow: residues Phe2–Leu22, Met70–Pro90, Leu102–Ala122, Ala147–Ile167, Tyr171–Ala191, Leu222–Phe242, Glu253–Ile273, and Leu294–Ile314.

This sequence belongs to the complex I subunit 1 family.

It is found in the mitochondrion inner membrane. It carries out the reaction a ubiquinone + NADH + 5 H(+)(in) = a ubiquinol + NAD(+) + 4 H(+)(out). Functionally, core subunit of the mitochondrial membrane respiratory chain NADH dehydrogenase (Complex I) that is believed to belong to the minimal assembly required for catalysis. Complex I functions in the transfer of electrons from NADH to the respiratory chain. The immediate electron acceptor for the enzyme is believed to be ubiquinone. This is NADH-ubiquinone oxidoreductase chain 1 (MT-ND1) from Diaemus youngi (White-winged vampire bat).